Consider the following 679-residue polypeptide: Methionine--tRNA ligase (679 aa).

The short motif at 15 to 25 (PYANGPIHLGH) is the 'HIGH' region element. Zn(2+) contacts are provided by C146, C149, C159, and C162. Residues 332-336 (KMSKS) carry the 'KMSKS' region motif. An ATP-binding site is contributed by K335. Residues 578–679 (DFAKIDLRIA…EGAQPGMKVK (102 aa)) form the tRNA-binding domain.

The protein belongs to the class-I aminoacyl-tRNA synthetase family. MetG type 1 subfamily. As to quaternary structure, homodimer. The cofactor is Zn(2+).

It is found in the cytoplasm. The enzyme catalyses tRNA(Met) + L-methionine + ATP = L-methionyl-tRNA(Met) + AMP + diphosphate. Is required not only for elongation of protein synthesis but also for the initiation of all mRNA translation through initiator tRNA(fMet) aminoacylation. In Shewanella halifaxensis (strain HAW-EB4), this protein is Methionine--tRNA ligase.